The primary structure comprises 520 residues: Probable bifunctional tRNA threonylcarbamoyladenosine biosynthesis protein (520 aa).

Positions 1 to 318 are kae1; the sequence is MKIGPVLGIE…YRADQVLVTW (318 aa). Residues H105, H109, and Y126 each contribute to the Fe cation site. L-threonylcarbamoyladenylate is bound by residues 126–130, D158, G171, E175, and N251; that span reads YASGA. D279 provides a ligand contact to Fe cation. The Protein kinase domain occupies 327–520; sequence RHPDAYSARG…HEIELRGRYL (194 aa). ATP-binding positions include 333–341 and K350; that span reads SARGAEAIV. The active-site Proton acceptor; for kinase activity is the D437.

It in the N-terminal section; belongs to the KAE1 / TsaD family. The protein in the C-terminal section; belongs to the protein kinase superfamily. Tyr protein kinase family. BUD32 subfamily. In terms of assembly, component of the KEOPS complex that consists of Kae1, Bud32, Cgi121 and Pcc1; the whole complex dimerizes. It depends on Fe(2+) as a cofactor.

The protein resides in the cytoplasm. The catalysed reaction is L-seryl-[protein] + ATP = O-phospho-L-seryl-[protein] + ADP + H(+). The enzyme catalyses L-threonyl-[protein] + ATP = O-phospho-L-threonyl-[protein] + ADP + H(+). It catalyses the reaction L-threonylcarbamoyladenylate + adenosine(37) in tRNA = N(6)-L-threonylcarbamoyladenosine(37) in tRNA + AMP + H(+). Its function is as follows. Required for the formation of a threonylcarbamoyl group on adenosine at position 37 (t(6)A37) in tRNAs that read codons beginning with adenine. Is a component of the KEOPS complex that is probably involved in the transfer of the threonylcarbamoyl moiety of threonylcarbamoyl-AMP (TC-AMP) to the N6 group of A37. The Kae1 domain likely plays a direct catalytic role in this reaction. The Bud32 domain probably displays kinase activity that regulates Kae1 function. The protein is Probable bifunctional tRNA threonylcarbamoyladenosine biosynthesis protein of Methanospirillum hungatei JF-1 (strain ATCC 27890 / DSM 864 / NBRC 100397 / JF-1).